An 801-amino-acid chain; its full sequence is Protein ACCUMULATION AND REPLICATION OF CHLOROPLASTS 6, chloroplastic (801 aa).

The N-terminal 67 residues, 1-67 (MEALSHVGIG…SSSFATATTT (67 aa)), are a transit peptide targeting the chloroplast. Residues 68-618 (ATLVSPPPSI…ADMLKEASVK (551 aa)) are Stromal-facing. Residues 89-153 (DFYQVLGAQT…RSRREYNEGL (65 aa)) form the J domain. Residues 619–638 (ILAAGVAIGLISLFSQKYFL) form a helical membrane-spanning segment. Over 639-801 (KSSSSFQRKD…KITEGSVLAS (163 aa)) the chain is Chloroplast intermembrane. The interaction with PDV2 stretch occupies residues 639 to 801 (KSSSSFQRKD…KITEGSVLAS (163 aa)).

Self-interacts. Part of a complex made of ARC3, ARC6, FTSZ1 and FTSZ2. Interacts with FTSZ2-1 and FTSZ2-2 (via C-terminus), but not with FTSZ1; this interaction enables ARC3 binding to FTSZ2. Binds to CDT1A. Interacts (via C-terminus) with PDV2 (via C-terminus) in the chloroplast intermembrane space; this interaction induces homodimerization and leads to the formation of a heterotetramer containing two ARC6 and two PDV2 subunits. Interacts with MCD1 in the chloroplast stroma and facilitates its subsequent binding to FtsZ2-1. Interacts (via J domain) with CJD1 (via J-like domain). In terms of tissue distribution, mostly expressed in young leaves.

It localises to the plastid. The protein localises to the chloroplast inner membrane. Functionally, component of the plastid division machinery consisting in a binary fission accomplished by the simultaneous constriction of the FtsZ ring on the stromal side of the inner envelope membrane, and the ARC5 ring on the cytosolic side of the outer envelope membrane. Involved in the initiation of proplastid and plastid division (including chloroplasts, statoliths and leukoplasts). Promotes the assembly and/or stabilization of the plastid-dividing FtsZ ring, functioning as an antagonistic regulator of FtsZ dynamics against CDP1 and facilitating MCD1 positioning to membrane tethered FtsZ filaments to form the chloroplast Z-Ring; inhibits GDP-induced disassembly of FTSZ2 but enables ARC3 binding to FTSZ2-1. Relays plastid division site position between stroma and outer surface via interactions with the stromal FtsZ ring and the outer membrane PDV2 that recruits cytoplasmic ARC5 ring. Required for plastid equatorial positioning of PDV2 and ARC5. May contribute to gravitropism in stems and hypocotyls. Seems to influence stromule (stroma-filled tubular extensions of the plastid envelope membrane) length and frequency. The protein is Protein ACCUMULATION AND REPLICATION OF CHLOROPLASTS 6, chloroplastic of Arabidopsis thaliana (Mouse-ear cress).